We begin with the raw amino-acid sequence, 596 residues long: Sodium/mannose cotransporter SLC5A10 (596 aa).

Residues 1–15 (MAANSTSDLHTPGTQ) are Extracellular-facing. Residue Asn-4 is glycosylated (N-linked (GlcNAc...) asparagine). Residues 16 to 36 (LSVADIIVITVYFALNVAVGI) traverse the membrane as a helical segment. Residues 37-72 (WSSCRASRNTVNGYFLAGRDMTWWPIGASLFASSEG) are Cytoplasmic-facing. The chain crosses the membrane as a helical span at residues 73–93 (SGLFIGLAGSGAAGGLAVAGF). Over 94–99 (EWNATY) the chain is Extracellular. The N-linked (GlcNAc...) asparagine glycan is linked to Asn-96. A helical membrane pass occupies residues 100-120 (VLLALAWVFVPIYISSEIVTL). The Cytoplasmic portion of the chain corresponds to 121–149 (PEYIQKRYGGQRIRMYLSVLSLLLSVFTK). Phosphoserine occurs at positions 141 and 145. Thr-148 bears the Phosphothreonine mark. Residues 150 to 170 (ISLDLYAGALFVHICLGWNFY) form a helical membrane-spanning segment. Residues 171–173 (LST) lie on the Extracellular side of the membrane. A helical membrane pass occupies residues 174–194 (ILTLGITALYTIAGGLAAVIY). The Cytoplasmic segment spans residues 195–200 (TDALQT). A helical membrane pass occupies residues 201–221 (LIMVVGAVILTIKAFDQIGGY). The Extracellular segment spans residues 222–264 (GQLEAAYAQAIPSRTIANTTCHLPRTDAMHMFRDPHTGDLPWT). A helical membrane pass occupies residues 265 to 285 (GMTFGLTIMATWYWCTDQVIV). Over 286-300 (QRSLSARDLNHAKAG) the chain is Cytoplasmic. Residues 301 to 321 (SILASYLKMLPMGLIIMPGMI) form a helical membrane-spanning segment. Topologically, residues 322 to 355 (SRALFPDDVGCVVPSECLRACGAEVGCSNIAYPK) are extracellular. The helical transmembrane segment at 356–376 (LVMELMPIGLRGLMIAVMLAA) threads the bilayer. The Cytoplasmic portion of the chain corresponds to 377–409 (LMSSLTSIFNSSSTLFTMDIWRRLRPRSGEREL). The helical transmembrane segment at 410-430 (LLVGRLVIVALIGVSVAWIPV) threads the bilayer. Over 431–443 (LQDSNSGQLFIYM) the chain is Extracellular. The helical transmembrane segment at 444–464 (QSVTSSLAPPVTAVFVLGVFW) threads the bilayer. Residues 465-471 (RRANEQG) lie on the Cytoplasmic side of the membrane. A helical membrane pass occupies residues 472 to 492 (AFWGLIAGLVVGATRLVLEFL). Topologically, residues 493–513 (NPAPPCGEPDTRPAVLGSIHY) are extracellular. A helical membrane pass occupies residues 514-534 (LHFAVALFALSGAVVVAGSLL). Residues 535 to 575 (TPPPQSVQIENLTWWTLAQDVPLGTKAGDGQTPQKHAFWAR) are Cytoplasmic-facing. A helical membrane pass occupies residues 576–596 (VCGFNAILLMCVNIFFYAYFA).

It belongs to the sodium:solute symporter (SSF) (TC 2.A.21) family. In terms of tissue distribution, predominantly expressed at high levels in kidney. Very low expression is detected in testes. Expressed in kidney. As to expression, the most abundant isoform expressed in kidney.

It is found in the apical cell membrane. The enzyme catalyses D-mannose(out) + Na(+)(out) = D-mannose(in) + Na(+)(in). It carries out the reaction D-fructopyranose(out) + Na(+)(out) = D-fructopyranose(in) + Na(+)(in). Its activity is regulated as follows. Inhibited by phlorizin. Functionally, electrogenic Na+-coupled sugar symporter that actively transports D-mannose or D-fructose at the plasma membrane, with a Na+ to sugar coupling ratio of 1:1. Transporter activity is driven by a transmembrane Na+ electrochemical gradient set by the Na+/K+ pump. Exclusively recognizes sugar substrates having a pyranose ring with an axial hydroxyl group on carbon 2. Has likely evolved to enable renal reabsorption of D-mannose, an important constituent of oligosaccharide chains of glycoproteins. Contributes to dietary D-fructose reabsorption from glomerular filtrate across the brush border of the kidney. Its function is as follows. Appears to have no transporter activity. In Homo sapiens (Human), this protein is Sodium/mannose cotransporter SLC5A10 (SLC5A10).